Here is a 553-residue protein sequence, read N- to C-terminus: Glucose-6-phosphate isomerase (553 aa).

Glu-355 (proton donor) is an active-site residue. Catalysis depends on residues His-386 and Lys-513.

It belongs to the GPI family.

Its subcellular location is the cytoplasm. It carries out the reaction alpha-D-glucose 6-phosphate = beta-D-fructose 6-phosphate. It functions in the pathway carbohydrate biosynthesis; gluconeogenesis. Its pathway is carbohydrate degradation; glycolysis; D-glyceraldehyde 3-phosphate and glycerone phosphate from D-glucose: step 2/4. Its function is as follows. Catalyzes the reversible isomerization of glucose-6-phosphate to fructose-6-phosphate. The protein is Glucose-6-phosphate isomerase of Baumannia cicadellinicola subsp. Homalodisca coagulata.